We begin with the raw amino-acid sequence, 389 residues long: Chitin-binding protein CbpD (389 aa).

The signal sequence occupies residues 1-25 (MKHYSATLALLPLTLALFLPQAAHA). The 183-residue stretch at 26 to 208 (HGSMETPPSR…EAFYACIDVS (183 aa)) folds into the Chitin-binding type-4 domain. Phosphotyrosine is present on tyrosine 37. At serine 210 the chain carries Phosphoserine.

It localises to the secreted. Its function is as follows. Binds but does not hydrolyze chitin. The protein is Chitin-binding protein CbpD (cpbD) of Pseudomonas aeruginosa (strain UCBPP-PA14).